The chain runs to 136 residues: Ribonuclease P protein component (136 aa).

The disordered stretch occupies residues 39 to 59 (LPDVSSSKPARDTGAEQTSAP).

This sequence belongs to the RnpA family. Consists of a catalytic RNA component (M1 or rnpB) and a protein subunit.

It carries out the reaction Endonucleolytic cleavage of RNA, removing 5'-extranucleotides from tRNA precursor.. In terms of biological role, RNaseP catalyzes the removal of the 5'-leader sequence from pre-tRNA to produce the mature 5'-terminus. It can also cleave other RNA substrates such as 4.5S RNA. The protein component plays an auxiliary but essential role in vivo by binding to the 5'-leader sequence and broadening the substrate specificity of the ribozyme. This is Ribonuclease P protein component from Salinispora tropica (strain ATCC BAA-916 / DSM 44818 / JCM 13857 / NBRC 105044 / CNB-440).